Consider the following 346-residue polypeptide: Protein FAF1 (346 aa).

2 disordered regions span residues 22–120 (QFGS…LRSG) and 323–346 (KRDIARISGGERSGKFNGKKKSRR). Residues 31 to 65 (FEDKTKNIRTEVDTRDSSGDEIDNSDHGSDFKDGT) show a composition bias toward basic and acidic residues. Over residues 72–85 (SDEDSGNETAEENN) the composition is skewed to acidic residues.

In terms of assembly, interacts with KRR1.

The protein localises to the nucleus. It localises to the nucleolus. Functionally, required for pre-rRNA processing and 40S ribosomal subunit assembly. Seems to act in the processing of 35S rRNA at the A(0), A(1), and A(2) cleavage sites. This Saccharomyces cerevisiae (strain ATCC 204508 / S288c) (Baker's yeast) protein is Protein FAF1 (FAF1).